The sequence spans 101 residues: Urease subunit beta (101 aa).

It belongs to the urease beta subunit family. As to quaternary structure, heterotrimer of UreA (gamma), UreB (beta) and UreC (alpha) subunits. Three heterotrimers associate to form the active enzyme.

The protein resides in the cytoplasm. It carries out the reaction urea + 2 H2O + H(+) = hydrogencarbonate + 2 NH4(+). It participates in nitrogen metabolism; urea degradation; CO(2) and NH(3) from urea (urease route): step 1/1. This Bradyrhizobium sp. (strain BTAi1 / ATCC BAA-1182) protein is Urease subunit beta.